Reading from the N-terminus, the 93-residue chain is UPF0473 protein YrzB (93 aa).

It belongs to the UPF0473 family.

In Bacillus subtilis (strain 168), this protein is UPF0473 protein YrzB (yrzB).